Reading from the N-terminus, the 225-residue chain is PKHD-type hydroxylase YbiX (225 aa).

Residues 78 to 177 form the Fe2OG dioxygenase domain; it reads TLSTPLFNRY…RVASFMWIQS (100 aa). Fe cation contacts are provided by histidine 96, aspartate 98, and histidine 158. Arginine 168 is a 2-oxoglutarate binding site.

Fe(2+) is required as a cofactor. It depends on L-ascorbate as a cofactor.

This is PKHD-type hydroxylase YbiX from Escherichia coli O6:H1 (strain CFT073 / ATCC 700928 / UPEC).